We begin with the raw amino-acid sequence, 98 residues long: Glutaredoxin 1 (98 aa).

In terms of domain architecture, Glutaredoxin spans 1-98 (MNKAILHAII…KLLEGQPKKD (98 aa)). An intrachain disulfide couples Cys-17 to Cys-20.

The protein belongs to the glutaredoxin family. As to quaternary structure, monomer.

It localises to the cytoplasm. In terms of biological role, has a glutathione-disulfide oxidoreductase activity in the presence of NADPH and glutathione reductase. Reduces low molecular weight disulfides and proteins. The protein is Glutaredoxin 1 (grxC1) of Rickettsia bellii (strain RML369-C).